Reading from the N-terminus, the 622-residue chain is WD repeat-containing protein 46 (622 aa).

Positions 1–135 (METAPKPGRG…KTQSKLEKAE (135 aa)) are disordered. Position 41 is a phosphoserine (serine 41). Residues 106–118 (EEARKFCRIDKSK) are compositionally biased toward basic and acidic residues. 5 WD repeats span residues 192–233 (LRQF…CEIN), 234–271 (VMEAVRDIHFLHSEALLAVAQNRWLYIYDNQGIELHCI), 314–353 (VRAGRLSVMAQNPYNAVIHLGHSNGTVSLWSPAVKEPLAK), 356–395 (CHRGGVRAVAVDSTGTYMATSGLDHQLKIFDLRGTFQPLS), and 398–435 (TLPQGAGHLAFSQRGLLVAGMGDVVNIWAGQGKASPPS). Residues 547–622 (AAFQPKAKQK…AREGGLQVDP (76 aa)) are disordered. A compositionally biased stretch (basic and acidic residues) spans 571 to 582 (VMDQEHRDKVRQ).

As to quaternary structure, part of the small subunit (SSU) processome, composed of more than 70 proteins and the RNA chaperone small nucleolar RNA (snoRNA) U3. Interacts with DDX21, NCL, NOP2 and EBNA1BP2.

It is found in the nucleus. The protein resides in the nucleolus. Its function is as follows. Scaffold component of the nucleolar structure. Required for localization of DDX21 and NCL to the granular compartment of the nucleolus. Part of the small subunit (SSU) processome, first precursor of the small eukaryotic ribosomal subunit. During the assembly of the SSU processome in the nucleolus, many ribosome biogenesis factors, an RNA chaperone and ribosomal proteins associate with the nascent pre-rRNA and work in concert to generate RNA folding, modifications, rearrangements and cleavage as well as targeted degradation of pre-ribosomal RNA by the RNA exosome. The polypeptide is WD repeat-containing protein 46 (Wdr46) (Mus musculus (Mouse)).